The sequence spans 493 residues: Glutamyl-tRNA(Gln) amidotransferase subunit A (493 aa).

Active-site charge relay system residues include Lys79 and Ser159. Ser183 (acyl-ester intermediate) is an active-site residue.

The protein belongs to the amidase family. GatA subfamily. As to quaternary structure, heterotrimer of A, B and C subunits.

The enzyme catalyses L-glutamyl-tRNA(Gln) + L-glutamine + ATP + H2O = L-glutaminyl-tRNA(Gln) + L-glutamate + ADP + phosphate + H(+). Its function is as follows. Allows the formation of correctly charged Gln-tRNA(Gln) through the transamidation of misacylated Glu-tRNA(Gln) in organisms which lack glutaminyl-tRNA synthetase. The reaction takes place in the presence of glutamine and ATP through an activated gamma-phospho-Glu-tRNA(Gln). This is Glutamyl-tRNA(Gln) amidotransferase subunit A from Brucella suis (strain ATCC 23445 / NCTC 10510).